A 204-amino-acid polypeptide reads, in one-letter code: Large ribosomal subunit protein eL15A (204 aa).

The disordered stretch occupies residues 164 to 185; sequence LTATGKKSRGINKGHKFNNTKA. The segment covering 169–185 has biased composition (basic residues); the sequence is KKSRGINKGHKFNNTKA.

Belongs to the eukaryotic ribosomal protein eL15 family. As to quaternary structure, component of the large ribosomal subunit (LSU). Mature yeast ribosomes consist of a small (40S) and a large (60S) subunit. The 40S small subunit contains 1 molecule of ribosomal RNA (18S rRNA) and 33 different proteins (encoded by 57 genes). The large 60S subunit contains 3 rRNA molecules (25S, 5.8S and 5S rRNA) and 46 different proteins (encoded by 81 genes).

It is found in the cytoplasm. Its function is as follows. Component of the ribosome, a large ribonucleoprotein complex responsible for the synthesis of proteins in the cell. The small ribosomal subunit (SSU) binds messenger RNAs (mRNAs) and translates the encoded message by selecting cognate aminoacyl-transfer RNA (tRNA) molecules. The large subunit (LSU) contains the ribosomal catalytic site termed the peptidyl transferase center (PTC), which catalyzes the formation of peptide bonds, thereby polymerizing the amino acids delivered by tRNAs into a polypeptide chain. The nascent polypeptides leave the ribosome through a tunnel in the LSU and interact with protein factors that function in enzymatic processing, targeting, and the membrane insertion of nascent chains at the exit of the ribosomal tunnel. The sequence is that of Large ribosomal subunit protein eL15A from Saccharomyces cerevisiae (strain ATCC 204508 / S288c) (Baker's yeast).